The chain runs to 224 residues: Propanediol dehydratase medium subunit (224 aa).

Positions 1–18 (MEINEKLLRQIIEDVLSE) are targets protein to the BMC.

This sequence belongs to the diol/glycerol dehydratase medium subunit family. In terms of assembly, the propanediol dehydratase enzyme is a heterotrimeric complex composed of a large (PduC), a medium (PduD) and a small (PduE) subunit. It depends on adenosylcob(III)alamin as a cofactor.

The protein localises to the bacterial microcompartment. It carries out the reaction propane-1,2-diol = propanal + H2O. It functions in the pathway polyol metabolism; 1,2-propanediol degradation. In terms of biological role, part of the PduCDE complex that catalyzes the dehydration of 1,2-propanediol (1,2-PD) to propionaldehyde. This subunit is directly targeted to the bacterial microcompartment (BMC). Its function is as follows. Expression of a cosmid containing the full 21-gene pdu operon in E.coli allows E.coli to grow on 1,2-propanediol (1,2-PD) with the appearance of BMCs in its cytoplasm. The 1,2-PD-specific bacterial microcompartment (BMC) concentrates low levels of 1,2-PD catabolic enzymes, concentrates volatile reaction intermediates thus enhancing pathway flux and keeps the level of toxic, mutagenic propionaldehyde low. The protein is Propanediol dehydratase medium subunit of Citrobacter freundii.